A 670-amino-acid polypeptide reads, in one-letter code: Major fimbrium tip subunit FimD (670 aa).

A signal peptide spans 1-24 (MRTNRILNIICPPILFLLVGFLFG). The N-palmitoyl cysteine moiety is linked to residue Cys-25. The S-diacylglycerol cysteine moiety is linked to residue Cys-25. A propeptide spanning residues 25–50 (CVREDIESDMNETSSLFLQVQPYNQR) is cleaved from the precursor.

It belongs to the FimD family. Fimbriae are composed of a major, structural subunit and the minor components FimC, FimD and FimE. Identified in a complex composed of FimC, FimD and FimE (in vitro). The complex interacts with host extracellular matrix proteins, including fibronectin and type I collagen. Interacts with host CXCR4.

It localises to the fimbrium. The protein resides in the cell outer membrane. In terms of biological role, probably a component of the fimbrium tip. These long, filamentous pili are attached to the cell surface; they mediate biofilm formation, adhesion onto host cells and onto other bacteria that are part of the oral microbiome. They play an important role in invasion of periodontal tissues and are major virulence factors. FimC, FimD and FimE contribute to interaction with host CXCR4 and thereby down-regulate the TLR2-mediated host immune response. This is Major fimbrium tip subunit FimD from Porphyromonas gingivalis (strain ATCC 33277 / DSM 20709 / CIP 103683 / JCM 12257 / NCTC 11834 / 2561).